We begin with the raw amino-acid sequence, 78 residues long: Ubiquinol-cytochrome-c reductase complex assembly factor 3 (78 aa).

Residues 1–5 (MSGMR) lie on the Mitochondrial matrix side of the membrane. A helical membrane pass occupies residues 6–26 (ILTGSVALGGLTYAIWIIFSP). Topologically, residues 27-78 (GEERKKEILKSLPEANPVRMEETRKRNAIMLQVLKDAAETNDNIARGFGSQK) are mitochondrial intermembrane.

The protein belongs to the UQCC3 family. In terms of assembly, associates with the ubiquinol-cytochrome c reductase complex (mitochondrial respiratory chain complex III or cytochrome b-c1 complex).

The protein localises to the mitochondrion inner membrane. In terms of biological role, required for the assembly of the ubiquinol-cytochrome c reductase complex (mitochondrial respiratory chain complex III or cytochrome b-c1 complex), mediating cytochrome b recruitment and probably stabilization within the complex. Thereby, plays an important role in ATP production by mitochondria. Cardiolipin-binding protein, it may also control the cardiolipin composition of mitochondria membranes and their morphology. This Danio rerio (Zebrafish) protein is Ubiquinol-cytochrome-c reductase complex assembly factor 3.